The sequence spans 264 residues: Putative hydro-lyase Cgl2544/cg2803 (264 aa).

The protein belongs to the D-glutamate cyclase family.

This chain is Putative hydro-lyase Cgl2544/cg2803, found in Corynebacterium glutamicum (strain ATCC 13032 / DSM 20300 / JCM 1318 / BCRC 11384 / CCUG 27702 / LMG 3730 / NBRC 12168 / NCIMB 10025 / NRRL B-2784 / 534).